The following is a 312-amino-acid chain: MVFGSRPPALTEANIGDQSGKVFIVTGATSGYGLLLSTYLYQNNGTVYLAARNAKKTAEVIADLKQRFPASRGRLDSISLNLSDLSTIKKSAEEFLAKETRLHVLWNNAGVMFPPAGSTTSQGYELQLGTNNVGPHLFTKLLYPTLAATAKEAPKNTVRVVWVSSDAASWAPKPAIDFNNLDYRRNESDRSKYGRSKAGTVMQAVELARRARKDGSGIVSIALDPGIANTGLQRDMGRLMSTMVKLIANKPEIGAYTQLFAGLSPEITAEVAEKEWVVPPGKIGCPRRDLFTDTETSRKWWEWNEEQVKAYL.

The NADP(+) site is built by Lys-56, Asn-108, and Lys-140. Ser-164 functions as the Proton donor in the catalytic mechanism. NADP(+)-binding residues include Tyr-193 and Lys-197. Tyr-193 acts as the Proton acceptor in catalysis. Lys-197 functions as the Lowers pKa of active site Tyr in the catalytic mechanism.

This sequence belongs to the short-chain dehydrogenases/reductases (SDR) family.

The protein operates within secondary metabolite biosynthesis. Its function is as follows. Short-chain dehydrogenase/reductase; part of the gene cluster that mediates the biosynthesis of aspernidine A, a prenylated isoindolinone. The starting point of the biosynthesis of aspernidin A is the production of orsellinaldehyde by the non-reducing polyketide synthase pkfA. Hydroxylation, methylation of one of the phenol groups, and prenylation, presumably catalyzed by the prenyltransferase pkfE, would be needed to yield aspernidine D. Subsequently, the cytochrome P450 monooxygenase pkfB is responsible for hydroxylation of aspernidine D to yield aspernidine E. The dehydrogenase pkfF may be responsible for further oxidation of aspernidine E to form a dialdehyde intermediate which is further transformed in a series of steps, some of which are enzyme-mediated, to generate aspernidine A. The possibility that additional enzymes outside of the cluster are involved in aspernidine A biosynthesis cannot be excluded. This is Short-chain dehydrogenase/reductase pkfC from Emericella nidulans (strain FGSC A4 / ATCC 38163 / CBS 112.46 / NRRL 194 / M139) (Aspergillus nidulans).